A 305-amino-acid chain; its full sequence is N-acetylmuramic acid 6-phosphate etherase (305 aa).

Positions 54–217 constitute an SIS domain; the sequence is AVPQLERGGR…SSALMVRLGK (164 aa). E82 functions as the Proton donor in the catalytic mechanism. Residue E113 is part of the active site.

It belongs to the GCKR-like family. MurNAc-6-P etherase subfamily. Homodimer.

The enzyme catalyses N-acetyl-D-muramate 6-phosphate + H2O = N-acetyl-D-glucosamine 6-phosphate + (R)-lactate. It participates in amino-sugar metabolism; N-acetylmuramate degradation. Functionally, specifically catalyzes the cleavage of the D-lactyl ether substituent of MurNAc 6-phosphate, producing GlcNAc 6-phosphate and D-lactate. The chain is N-acetylmuramic acid 6-phosphate etherase from Deinococcus radiodurans (strain ATCC 13939 / DSM 20539 / JCM 16871 / CCUG 27074 / LMG 4051 / NBRC 15346 / NCIMB 9279 / VKM B-1422 / R1).